Here is a 212-residue protein sequence, read N- to C-terminus: ER lumen protein-retaining receptor 2 (212 aa).

Residues 1 to 4 (MNVF) lie on the Lumenal side of the membrane. A helical membrane pass occupies residues 5–24 (RLSGDLSHLAAIIILLLKIW). Residues 25–32 (KSRSCAGI) are Cytoplasmic-facing. A helical transmembrane segment spans residues 33–52 (SGKSQLLFALVFTTRYLDLL). The interaction with the K-D-E-L motif on target proteins stretch occupies residues 47-48 (RY). Residues 53–58 (TSFISL) lie on the Lumenal side of the membrane. A helical membrane pass occupies residues 59-79 (YNTSMKVIYIGCAYATVYLIY). Residues 80–92 (MKFKATYDGNHDT) lie on the Cytoplasmic side of the membrane. Residues 93–110 (FRVEFLVVPVGGLSVLVN) form a helical membrane-spanning segment. The Lumenal portion of the chain corresponds to 111-116 (HDFSPL). A helical transmembrane segment spans residues 117-135 (EILWTFSIYLESVAILPQL). Topologically, residues 136-149 (FMISKTGEAETITT) are cytoplasmic. The helical transmembrane segment at 150–168 (HYLFFLGLYRALYLFNWIW) threads the bilayer. The segment at 159 to 169 (RALYLFNWIWR) is interaction with the K-D-E-L motif on target proteins. Residues 169 to 178 (RYSFEGFFDL) lie on the Lumenal side of the membrane. The helical transmembrane segment at 179–199 (IAIVAGVVQTILYCDFFYLYV) threads the bilayer. The Cytoplasmic segment spans residues 200–212 (TKVLKGKKLSLPA). The segment at 204 to 207 (KGKK) is important for recycling of cargo proteins with the sequence motif K-D-E-L from the Golgi to the endoplasmic reticulum.

It belongs to the ERD2 family.

It is found in the endoplasmic reticulum membrane. The protein localises to the golgi apparatus membrane. The protein resides in the cytoplasmic vesicle. Its subcellular location is the COPI-coated vesicle membrane. Its function is as follows. Receptor for the C-terminal sequence motif K-D-E-L that is present on endoplasmic reticulum resident proteins and that mediates their recycling from the Golgi back to the endoplasmic reticulum. Binding is pH dependent, and is optimal at pH 5-5.4. This chain is ER lumen protein-retaining receptor 2 (kdelr2), found in Xenopus tropicalis (Western clawed frog).